The following is a 147-amino-acid chain: Plasminogen receptor (KT) (147 aa).

Residues 1 to 52 (MGFIFSKSMNENMKNQQEFMVMHARLQLERQLIMQNEMRERQMAMQIAWSRE) are Extracellular-facing. The helical transmembrane segment at 53–73 (FLKYFGTFFGIATISLAAGAI) threads the bilayer. Residues 74 to 78 (KRKKP) are Cytoplasmic-facing. A helical membrane pass occupies residues 79-99 (AFLIPIVPLSFIFTYQYDLGY). Over 100–147 (GTLLQRMKSEAEDILETEKTKLELPKGLITFESLEKARREQSKFFSDK) the chain is Extracellular.

As to quaternary structure, interacts with PLAT. Interacts with PLAUR. In terms of tissue distribution, expressed in adrenal medulla (pheochromocytoma).

The protein localises to the cell membrane. In terms of biological role, receptor for plasminogen. Regulates urokinase plasminogen activator-dependent and stimulates tissue-type plasminogen activator-dependent cell surface plasminogen activation. Proposed to be part of a local catecholaminergic cell plasminogen activation system that regulates neuroendocrine prohormone processing. Involved in regulation of inflammatory response; regulates monocyte chemotactic migration and matrix metalloproteinase activation, such as of MMP2 and MMP9. This Rattus norvegicus (Rat) protein is Plasminogen receptor (KT) (Plgrkt).